Here is a 183-residue protein sequence, read N- to C-terminus: ATP synthase subunit delta (183 aa).

This sequence belongs to the ATPase delta chain family. In terms of assembly, F-type ATPases have 2 components, F(1) - the catalytic core - and F(0) - the membrane proton channel. F(1) has five subunits: alpha(3), beta(3), gamma(1), delta(1), epsilon(1). F(0) has three main subunits: a(1), b(2) and c(10-14). The alpha and beta chains form an alternating ring which encloses part of the gamma chain. F(1) is attached to F(0) by a central stalk formed by the gamma and epsilon chains, while a peripheral stalk is formed by the delta and b chains.

It localises to the cell inner membrane. Functionally, f(1)F(0) ATP synthase produces ATP from ADP in the presence of a proton or sodium gradient. F-type ATPases consist of two structural domains, F(1) containing the extramembraneous catalytic core and F(0) containing the membrane proton channel, linked together by a central stalk and a peripheral stalk. During catalysis, ATP synthesis in the catalytic domain of F(1) is coupled via a rotary mechanism of the central stalk subunits to proton translocation. This protein is part of the stalk that links CF(0) to CF(1). It either transmits conformational changes from CF(0) to CF(1) or is implicated in proton conduction. This chain is ATP synthase subunit delta, found in Rickettsia typhi (strain ATCC VR-144 / Wilmington).